We begin with the raw amino-acid sequence, 185 residues long: MKGSLFSTEIAEPYAQALMSLAQSRDITRSIGEDCRSILDILEESAELREFISSPIIKDEDKRGVLNRLLGNDIHHYLRNFLMLLVDKRRIVFLQAICEQYLALLRKLTNTVLAEVTASTELSEGQRRDVIDKIKALTGAESVELKTDIDPDLIGGVIIKVGSQVFDASLRGQLRRISISLTGAS.

It belongs to the ATPase delta chain family. As to quaternary structure, F-type ATPases have 2 components, F(1) - the catalytic core - and F(0) - the membrane proton channel. F(1) has five subunits: alpha(3), beta(3), gamma(1), delta(1), epsilon(1). CF(0) has four main subunits: a(1), b(1), b'(1) and c(10-14). The alpha and beta chains form an alternating ring which encloses part of the gamma chain. F(1) is attached to F(0) by a central stalk formed by the gamma and epsilon chains, while a peripheral stalk is formed by the delta, b and b' chains.

It localises to the cellular thylakoid membrane. F(1)F(0) ATP synthase produces ATP from ADP in the presence of a proton or sodium gradient. F-type ATPases consist of two structural domains, F(1) containing the extramembraneous catalytic core and F(0) containing the membrane proton channel, linked together by a central stalk and a peripheral stalk. During catalysis, ATP synthesis in the catalytic domain of F(1) is coupled via a rotary mechanism of the central stalk subunits to proton translocation. Functionally, this protein is part of the stalk that links CF(0) to CF(1). It either transmits conformational changes from CF(0) to CF(1) or is implicated in proton conduction. The sequence is that of ATP synthase subunit delta from Crocosphaera subtropica (strain ATCC 51142 / BH68) (Cyanothece sp. (strain ATCC 51142)).